The following is a 439-amino-acid chain: Gnt-II system L-idonate transporter (439 aa).

Topologically, residues 1 to 11 (MPLIIIAAGVA) are periplasmic. A helical transmembrane segment spans residues 12 to 34 (LLLILMIGFKVNGFIALVLVAAV). Residues 35 to 53 (VGFAEGMDAQAVLHSIQNG) are Cytoplasmic-facing. Residues 54–76 (IGSTLGGLAMILGFGAMLGKLIS) form a helical membrane-spanning segment. Residues 77 to 96 (DTGAAQRIATTLIATFGKKR) lie on the Periplasmic side of the membrane. A helical transmembrane segment spans residues 97–114 (VQWALVITGLVVGLAMFF). The Cytoplasmic portion of the chain corresponds to 115–118 (EVGF). Residues 119–141 (VLLLPLVFTIVASSGLPLLYVGV) form a helical membrane-spanning segment. At 142-170 (PMVAALSVTHCFLPPHPGPTAIATIFEAN) the chain is on the periplasmic side. Residues 171-193 (LGTTLLYGFIITIPTVIVAGPLF) form a helical membrane-spanning segment. Over 194–218 (SKLLTRFEKAPPEGLFNPHLFSEEE) the chain is Cytoplasmic. Residues 219–241 (MPSFWNSIFAAVIPVILMAIAAV) traverse the membrane as a helical segment. The Periplasmic segment spans residues 242-253 (CEITLPKTNTVR). The helical transmembrane segment at 254–276 (LFFEFVGNPAVALFIAIVIAIFT) threads the bilayer. Residues 277–290 (LGRRNGRTIEQIMD) lie on the Cytoplasmic side of the membrane. Residues 291–310 (IIGDSIGAIAMIVFIIAGGG) form a helical membrane-spanning segment. Over 311–322 (AFKQVLVDSGVG) the chain is Periplasmic. A helical membrane pass occupies residues 323 to 345 (HYISHLMTGTTLSPLLMCWTVAA). Over 346–348 (LLR) the chain is Cytoplasmic. Residues 349 to 371 (IALGSATVAAITTAGVVLPIINV) traverse the membrane as a helical segment. The Periplasmic portion of the chain corresponds to 372 to 377 (THADPA). Residues 378 to 400 (LMVLATGAGSVIASHVNDPGFWL) form a helical membrane-spanning segment. Over 401–414 (FKGYFNLTVGETLR) the chain is Cytoplasmic. The chain crosses the membrane as a helical span at residues 415–437 (TWTVMETLISIMGLLGVLAINAV). Topologically, residues 438-439 (LH) are periplasmic.

The protein belongs to the GntP permease family.

The protein resides in the cell inner membrane. The catalysed reaction is L-idonate(in) + H(+)(in) = L-idonate(out) + H(+)(out). The enzyme catalyses D-gluconate(in) + H(+)(in) = D-gluconate(out) + H(+)(out). It catalyses the reaction 5-dehydro-D-gluconate(in) + H(+)(in) = 5-dehydro-D-gluconate(out) + H(+)(out). Its pathway is carbohydrate acid metabolism; L-idonate degradation. Its function is as follows. Transporter which is probably involved in L-idonate metabolism. Transports L-idonate from the periplasm across the inner membrane. Can also transport D-gluconate and 5-keto-D-gluconate. It has been reported that gluconate uptake probably occurs via a proton-symport mechanism in E.coli. This chain is Gnt-II system L-idonate transporter, found in Escherichia coli (strain K12).